Reading from the N-terminus, the 248-residue chain is Tyrosine recombinase XerD-like (248 aa).

The 72-residue stretch at 1 to 72 (MKSYIEPFIA…TANQFLYYLY (72 aa)) folds into the Core-binding (CB) domain. The Tyr recombinase domain maps to 85–248 (DTMKVMRTEK…PVTLEKYYKS (164 aa)). Catalysis depends on residues K149 and R213. The active-site O-(3'-phospho-DNA)-tyrosine intermediate is Y245.

This sequence belongs to the 'phage' integrase family. XerD-like subfamily.

It is found in the cytoplasm. In terms of biological role, putative tyrosine recombinase. Not involved in the cutting and rejoining of the recombining DNA molecules on dif(SL) site. In Streptococcus pyogenes serotype M3 (strain ATCC BAA-595 / MGAS315), this protein is Tyrosine recombinase XerD-like.